An 820-amino-acid polypeptide reads, in one-letter code: Phenylalanine--tRNA ligase beta subunit (820 aa).

Positions 42–154 (KGGLEGLVIG…EDAVPGTLAK (113 aa)) constitute a tRNA-binding domain. The 77-residue stretch at 413–489 (AQDFIVELTY…RIYGYNNVEI (77 aa)) folds into the B5 domain. Asp-467, Asp-473, Glu-476, and Asp-477 together coordinate Mg(2+). One can recognise an FDX-ACB domain in the interval 727–820 (SKFPAVKRDL…LEDKLGAKLR (94 aa)).

This sequence belongs to the phenylalanyl-tRNA synthetase beta subunit family. Type 1 subfamily. As to quaternary structure, tetramer of two alpha and two beta subunits. Requires Mg(2+) as cofactor.

Its subcellular location is the cytoplasm. The enzyme catalyses tRNA(Phe) + L-phenylalanine + ATP = L-phenylalanyl-tRNA(Phe) + AMP + diphosphate + H(+). This chain is Phenylalanine--tRNA ligase beta subunit, found in Bacteroides fragilis (strain ATCC 25285 / DSM 2151 / CCUG 4856 / JCM 11019 / LMG 10263 / NCTC 9343 / Onslow / VPI 2553 / EN-2).